Reading from the N-terminus, the 172-residue chain is S-ribosylhomocysteine lyase (172 aa).

Fe cation is bound by residues histidine 54, histidine 58, and cysteine 128.

It belongs to the LuxS family. In terms of assembly, homodimer. Fe cation serves as cofactor.

The catalysed reaction is S-(5-deoxy-D-ribos-5-yl)-L-homocysteine = (S)-4,5-dihydroxypentane-2,3-dione + L-homocysteine. Its function is as follows. Involved in the synthesis of autoinducer 2 (AI-2) which is secreted by bacteria and is used to communicate both the cell density and the metabolic potential of the environment. The regulation of gene expression in response to changes in cell density is called quorum sensing. Catalyzes the transformation of S-ribosylhomocysteine (RHC) to homocysteine (HC) and 4,5-dihydroxy-2,3-pentadione (DPD). This Aliivibrio fischeri (strain MJ11) (Vibrio fischeri) protein is S-ribosylhomocysteine lyase.